A 229-amino-acid chain; its full sequence is Ribosome maturation factor RimM (229 aa).

The segment at 1–39 (MAGHDSGSAKRGRSPSFGVFVRKPVERAPTKGAGDGAAD) is disordered. Residues 148–229 (ADEFYWVDLI…RIVVDWEADY (82 aa)) enclose the PRC barrel domain.

The protein belongs to the RimM family. As to quaternary structure, binds ribosomal protein uS19.

The protein resides in the cytoplasm. An accessory protein needed during the final step in the assembly of 30S ribosomal subunit, possibly for assembly of the head region. Essential for efficient processing of 16S rRNA. May be needed both before and after RbfA during the maturation of 16S rRNA. It has affinity for free ribosomal 30S subunits but not for 70S ribosomes. This chain is Ribosome maturation factor RimM, found in Burkholderia thailandensis (strain ATCC 700388 / DSM 13276 / CCUG 48851 / CIP 106301 / E264).